A 210-amino-acid polypeptide reads, in one-letter code: T-cell surface glycoprotein CD8 beta chain (210 aa).

An N-terminal signal peptide occupies residues 1–21 (MQPGLWLLLATQLAALRGSSV). An Ig-like V-type domain is found at 22–132 (LQQAPGSVMV…ELTFGKGTRL (111 aa)). At 22–170 (LQQAPGSVMV…VTQKGPSCGL (149 aa)) the chain is on the extracellular side. A disulfide bridge connects residues Cys41 and Cys116. N-linked (GlcNAc...) asparagine glycosylation is present at Asn102. A disordered region spans residues 139–161 (PTNSQPTKKPTPRKKMCRPPSPV). A helical transmembrane segment spans residues 171-191 (LTLGLLVAGVLVLLVSLGVAI). At 192–210 (HLYRLKRRARLRLLKQFYK) the chain is on the cytoplasmic side.

In terms of assembly, forms disulfide-linked heterodimers with CD8A at the cell surface. Interacts with CD3D; this interaction couples TCR-CD3 with CD8. Interacts with LCK. Post-translationally, phosphorylated as a consequence of T-cell activation. Palmitoylated at the cytoplasmic tail and thereby targets the heterodimer CD8A/CD8B to lipid rafts unlike CD8A homodimers.

It localises to the cell membrane. In terms of biological role, integral membrane glycoprotein that plays an essential role in the immune response and serves multiple functions in responses against both external and internal offenses. In T-cells, functions primarily as a coreceptor for MHC class I molecule:peptide complex. The antigens presented by class I peptides are derived from cytosolic proteins while class II derived from extracellular proteins. Interacts simultaneously with the T-cell receptor (TCR) and the MHC class I proteins presented by antigen presenting cells (APCs). In turn, recruits the Src kinase LCK to the vicinity of the TCR-CD3 complex. A palmitoylation site in the cytoplasmic tail of CD8B chain contributes to partitioning of CD8 into the plasma membrane lipid rafts where signaling proteins are enriched. Once LCK recruited, it initiates different intracellular signaling pathways by phosphorylating various substrates ultimately leading to lymphokine production, motility, adhesion and activation of cytotoxic T-lymphocytes (CTLs). Additionally, plays a critical role in thymic selection of CD8+ T-cells. In Felis catus (Cat), this protein is T-cell surface glycoprotein CD8 beta chain (CD8B).